A 601-amino-acid polypeptide reads, in one-letter code: FAD-binding monooxygenase stcW (601 aa).

FAD is bound by residues 42 to 43 (FS), Glu-64, Trp-73, Asp-84, Tyr-90, and Val-133.

Belongs to the FAD-binding monooxygenase family. It depends on FAD as a cofactor.

It participates in mycotoxin biosynthesis; sterigmatocystin biosynthesis. Functionally, FAD-binding monooxygenase; part of the gene cluster that mediates the biosynthesis of sterigmatocystin (ST), a polyketide-derived furanocoumarin which is part of the most toxic and carcinogenic compounds among the known mycotoxins. The first step in the biosynthesis of sterigmatocystin is the production of hexanoate by the fatty acid synthase (FAS) units stcJ and stcK. The polyketide backbone is assembled by the non-reducing polyketide synthase stcA by condensation of the starter hexanoyl-CoA and 7 malonyl-CoA extender units followed by cyclization and release of norsolorinic acid. Norsolorinic acid is the first stable intermediate in the biosynthesis of sterigmatocystin and is converted into averantin (AVN) by the ketoreductase stcE which reduces the hexanoate ketone to an alcohol. Averantin is then oxidized into 5'-hydroxyaverantin (HAVN) by the cytochrome P450 monooxygenase stcF. 5'-hydroxyaverantin is further converted to 5'-oxyaverantin (OAVN) by the 5'-hydroxyaverantin dehydrogenase stcG. The next step is the conversion of OAVN into averufin (AVF) which is catalyzed by a yet to be identified enzyme. The cytochrome P450 monooxygenase stcB and the flavin-binding monooxygenase stcW are both required for the conversion of averufin to 1-hydroxyversicolorone. The esterase stcI probably catalyzes the formation of versiconal hemiacetal acetate from 1-hydroxyversicolorone. The oxydoreductase stcN then probably catalyzes the biosynthetic step from versiconal to versicolorin B (VERB). The next step is performed by the versicolorin B desaturase stcL to produce versicolorin A (VERA). The ketoreductase stcU and the cytochrome P450 monooxygenase stcS are involved in the conversion of versicolorin A to demethylsterigmatocystin. The Baeyer-Villiger oxidas stcQ and the reductase stcR might be involved in the biosynthetic step from versicolorin A to demethylsterigmatocystin. The final step in the biosynthesis of sterigmatocystin is the methylation of demethylsterigmatocystin catalyzed by the methyltransferase stcP. The sequence is that of FAD-binding monooxygenase stcW from Emericella nidulans (strain FGSC A4 / ATCC 38163 / CBS 112.46 / NRRL 194 / M139) (Aspergillus nidulans).